An 84-amino-acid chain; its full sequence is Cytochrome c oxidase subunit 12, mitochondrial (84 aa).

The 44-residue stretch at 27-70 (TKHCWQNYVDYHKCILAKGEDFAPCRQFWLAYRSLCPSGWYQRW) folds into the CHCH domain. The Cx9C motif signature appears at 30–40 (CWQNYVDYHKC). Intrachain disulfides connect Cys-30-Cys-62 and Cys-40-Cys-51. The Cx10C motif signature appears at 51 to 62 (CRQFWLAYRSLC).

Belongs to the cytochrome c oxidase subunit 6B family. In terms of assembly, component of the cytochrome c oxidase (complex IV, CIV), a multisubunit enzyme composed of 11 subunits. The complex is composed of a catalytic core of 3 subunits Cox1, Cox2 and Cox3, encoded in the mitochondrial DNA, and 8 supernumerary subunits Cox4, Cox5a/Cox5, Cox6, Cox7, Cox8, Cox7a/Cox9, Cox6b/Cox12 and Cox6a/Cox13, which are encoded in the nuclear genome. The complex exists as a monomer or a dimer and forms respiratory supercomplexes (SCs) in the inner mitochondrial membrane with NADH-ubiquinone oxidoreductase (complex I, CI) and ubiquinol-cytochrome c oxidoreductase (cytochrome b-c1 complex, complex III, CIII), resulting in various different assemblies (supercomplexes I(1)IV(1), I(1)III(3)IV(2), III(2)IV(1) and III(2)IV(2) as well as larger supercomplexes of compositions like I(1)III(2)IV(5-6)).

It is found in the mitochondrion inner membrane. It functions in the pathway energy metabolism; oxidative phosphorylation. Its function is as follows. Component of the cytochrome c oxidase, the last enzyme in the mitochondrial electron transport chain which drives oxidative phosphorylation. The respiratory chain contains 3 multisubunit complexes succinate dehydrogenase (complex II, CII), ubiquinol-cytochrome c oxidoreductase (cytochrome b-c1 complex, complex III, CIII) and cytochrome c oxidase (complex IV, CIV), that cooperate to transfer electrons derived from NADH and succinate to molecular oxygen, creating an electrochemical gradient over the inner membrane that drives transmembrane transport and the ATP synthase. Cytochrome c oxidase is the component of the respiratory chain that catalyzes the reduction of oxygen to water. Electrons originating from reduced cytochrome c in the intermembrane space (IMS) are transferred via the dinuclear copper A center (CU(A)) of Cox2 and heme A of Cox1 to the active site in Cox1, a binuclear center (BNC) formed by heme A3 and copper B (CU(B)). The BNC reduces molecular oxygen to 2 water molecules using 4 electrons from cytochrome c in the IMS and 4 protons from the mitochondrial matrix. The protein is Cytochrome c oxidase subunit 12, mitochondrial (cox-13) of Neurospora crassa (strain ATCC 24698 / 74-OR23-1A / CBS 708.71 / DSM 1257 / FGSC 987).